We begin with the raw amino-acid sequence, 74 residues long: uncharacterized protein (74 aa).

Positions M1–A19 are cleaved as a signal peptide.

This is an uncharacterized protein from Mycobacterium tuberculosis (strain ATCC 25618 / H37Rv).